Reading from the N-terminus, the 373-residue chain is Transmembrane protein adipocyte-associated 1 (373 aa).

N-linked (GlcNAc...) asparagine glycans are attached at residues asparagine 11 and asparagine 23. 7 helical membrane-spanning segments follow: residues 48 to 68, 76 to 96, 123 to 143, 151 to 171, 192 to 212, 234 to 254, and 265 to 285; these read LLLL…LPSA, SSPI…VGIA, FFLL…GHLE, VLAI…TLEI, QFWL…VILP, ILAL…FDII, and FLYF…GFFG. N-linked (GlcNAc...) asparagine glycosylation is present at asparagine 361.

The protein belongs to the UPF0359 family. As to expression, ubiquitous, with higher levels in heart, placenta and kidney.

It is found in the membrane. The chain is Transmembrane protein adipocyte-associated 1 (TPRA1) from Homo sapiens (Human).